A 796-amino-acid chain; its full sequence is Exocyst complex component 3 (796 aa).

Residues 87 to 174 (PQLKEKLREL…GTNTEKEQML (88 aa)) adopt a coiled-coil conformation.

Belongs to the SEC6 family. The exocyst complex is composed of sec-3/exoc1, sec-5/exoc2, sec-6/exoc3, sec-8/exoc4, sec-10/exoc5, sec-15/exoc6, exo-70/exoc7 and exo-84/exoc8.

Functionally, component of the exocyst complex involved in the docking of exocytic vesicles with fusion sites on the plasma membrane. The polypeptide is Exocyst complex component 3 (sec-6) (Caenorhabditis elegans).